Reading from the N-terminus, the 499-residue chain is Tektin-like protein 1 (499 aa).

Serine 14 carries the phosphoserine modification. A coiled-coil region spans residues 201–225; it reads WEKKELKSMKRKMEKDMEISEDLLK. The segment at 265–286 is disordered; the sequence is VDITRPPTPRTQGLKTPPPDPI. The stretch at 308 to 328 forms a coiled coil; it reads KDILTEMAKNEVDIQNQQQEI. Residue tyrosine 372 is modified to Phosphotyrosine.

As to quaternary structure, microtubule inner protein component of sperm flagellar doublet microtubules.

The protein localises to the cytoplasm. It localises to the cytoskeleton. Its subcellular location is the flagellum axoneme. Its function is as follows. Microtubule inner protein (MIP) part of the dynein-decorated doublet microtubules (DMTs) in sperm flagellar axoneme, which is required for motile flagellum beating. Forms an extensive interaction network cross-linking the lumen of axonemal doublet microtubules. In Mus musculus (Mouse), this protein is Tektin-like protein 1.